The following is a 151-amino-acid chain: Putative coiled-coil-helix-coiled-coil-helix domain-containing protein CHCHD2P9, mitochondrial (151 aa).

Residues 1-9 (MPRGSRSRT) constitute a mitochondrion transit peptide. Disordered regions lie at residues 1–50 (MPRG…AAAP) and 75–110 (TQGH…PAQQ). The segment covering 10-26 (SRMAPPASRAPQMRAAP) has biased composition (low complexity). The segment covering 27–38 (RPAPVAQPPAAA) has biased composition (pro residues). Composition is skewed to low complexity over residues 39-50 (PPSAVGSSAAAP) and 100-110 (QEPQGTQPAQQ). In terms of domain architecture, CHCH spans 111-151 (QQPCFYGIKQFLECAQNQGDIKLCEDFSKVLKQCRLAKGLA). Short sequence motifs (cx9C motif) lie at residues 114–124 (CFYGIKQFLEC) and 134–144 (CEDFSKVLKQC). Disulfide bonds link Cys-114-Cys-144 and Cys-124-Cys-134.

The protein resides in the mitochondrion. The chain is Putative coiled-coil-helix-coiled-coil-helix domain-containing protein CHCHD2P9, mitochondrial (CHCHD2P9) from Homo sapiens (Human).